Reading from the N-terminus, the 369-residue chain is Anhydro-N-acetylmuramic acid kinase (369 aa).

Residue 12-19 (GTSMDGVD) coordinates ATP.

The protein belongs to the anhydro-N-acetylmuramic acid kinase family.

The enzyme catalyses 1,6-anhydro-N-acetyl-beta-muramate + ATP + H2O = N-acetyl-D-muramate 6-phosphate + ADP + H(+). It functions in the pathway amino-sugar metabolism; 1,6-anhydro-N-acetylmuramate degradation. The protein operates within cell wall biogenesis; peptidoglycan recycling. Catalyzes the specific phosphorylation of 1,6-anhydro-N-acetylmuramic acid (anhMurNAc) with the simultaneous cleavage of the 1,6-anhydro ring, generating MurNAc-6-P. Is required for the utilization of anhMurNAc either imported from the medium or derived from its own cell wall murein, and thus plays a role in cell wall recycling. In Shewanella halifaxensis (strain HAW-EB4), this protein is Anhydro-N-acetylmuramic acid kinase.